We begin with the raw amino-acid sequence, 208 residues long: Large ribosomal subunit protein uL4 (208 aa).

The tract at residues arginine 45 to methionine 83 is disordered. Over residues glycine 69–serine 80 the composition is skewed to polar residues.

This sequence belongs to the universal ribosomal protein uL4 family. As to quaternary structure, part of the 50S ribosomal subunit.

In terms of biological role, one of the primary rRNA binding proteins, this protein initially binds near the 5'-end of the 23S rRNA. It is important during the early stages of 50S assembly. It makes multiple contacts with different domains of the 23S rRNA in the assembled 50S subunit and ribosome. Its function is as follows. Forms part of the polypeptide exit tunnel. The chain is Large ribosomal subunit protein uL4 from Chlorobium luteolum (strain DSM 273 / BCRC 81028 / 2530) (Pelodictyon luteolum).